The primary structure comprises 204 residues: Phosphoheptose isomerase (204 aa).

In terms of domain architecture, SIS spans 38 to 199 (MAVALARGGK…LFEAVMELGP (162 aa)). 53-55 (NGG) contributes to the substrate binding site. Residues histidine 62 and glutamate 66 each contribute to the Zn(2+) site. Substrate-binding positions include glutamate 66, 95–96 (ND), 121–123 (STS), serine 126, and glutamine 172. Glutamine 172 and histidine 180 together coordinate Zn(2+).

This sequence belongs to the SIS family. GmhA subfamily. In terms of assembly, homotetramer. Requires Zn(2+) as cofactor.

It is found in the cytoplasm. It catalyses the reaction 2 D-sedoheptulose 7-phosphate = D-glycero-alpha-D-manno-heptose 7-phosphate + D-glycero-beta-D-manno-heptose 7-phosphate. It participates in carbohydrate biosynthesis; D-glycero-D-manno-heptose 7-phosphate biosynthesis; D-glycero-alpha-D-manno-heptose 7-phosphate and D-glycero-beta-D-manno-heptose 7-phosphate from sedoheptulose 7-phosphate: step 1/1. Functionally, catalyzes the isomerization of sedoheptulose 7-phosphate in D-glycero-D-manno-heptose 7-phosphate. This is Phosphoheptose isomerase from Solidesulfovibrio magneticus (strain ATCC 700980 / DSM 13731 / RS-1) (Desulfovibrio magneticus).